Consider the following 464-residue polypeptide: Argininosuccinate lyase (464 aa).

Belongs to the lyase 1 family. Argininosuccinate lyase subfamily.

Its subcellular location is the cytoplasm. It carries out the reaction 2-(N(omega)-L-arginino)succinate = fumarate + L-arginine. It participates in amino-acid biosynthesis; L-arginine biosynthesis; L-arginine from L-ornithine and carbamoyl phosphate: step 3/3. The protein is Argininosuccinate lyase of Janthinobacterium sp. (strain Marseille) (Minibacterium massiliensis).